A 274-amino-acid chain; its full sequence is Large ribosomal subunit protein uL2 (274 aa).

Residues 197 to 274 (NSDHALEKSG…SKYIIERRKK (78 aa)) form a disordered region. Composition is skewed to basic residues over residues 207–220 (KAGRSRWLGRRPHN) and 244–274 (PRSRKGLYAKGLKTRAPKKHSSKYIIERRKK).

Belongs to the universal ribosomal protein uL2 family. Part of the 50S ribosomal subunit. Forms a bridge to the 30S subunit in the 70S ribosome.

Functionally, one of the primary rRNA binding proteins. Required for association of the 30S and 50S subunits to form the 70S ribosome, for tRNA binding and peptide bond formation. It has been suggested to have peptidyltransferase activity; this is somewhat controversial. Makes several contacts with the 16S rRNA in the 70S ribosome. In Porphyromonas gingivalis (strain ATCC BAA-308 / W83), this protein is Large ribosomal subunit protein uL2.